A 285-amino-acid chain; its full sequence is TATA box-binding protein-associated factor RNA polymerase I subunit D (285 aa).

2 disordered regions span residues 1–49 (MAQS…RIPT) and 85–112 (KKKR…TRNI). Residues 21 to 39 (GNQSDDSSNSSLFKTQCVP) are compositionally biased toward polar residues. At serine 24 the chain carries Phosphoserine. The span at 85 to 104 (KKKRKKRKKRKYKPKLRRQG) shows a compositional bias: basic residues. Serine 134 carries the post-translational modification Phosphoserine. Residues 193–219 (HKYMDDDGPLSPIEEPSTEDEATDPQS) form a disordered region. Serine 229 is modified (phosphoserine). Composition is skewed to basic and acidic residues over residues 242–264 (NLEQ…KDAT) and 273–285 (KGGE…SEVS). The segment at 242–285 (NLEQGKIKKESAFSKKSKAKDATQRGNRRSWKGGEHACLHSEVS) is disordered.

In terms of assembly, component of the transcription factor SL1/TIF-IB complex, composed of TBP and at least TAF1A, TAF1B, TAF1C and TAF1D. Interacts with UBTF.

It is found in the nucleus. Its function is as follows. Component of the transcription factor SL1/TIF-IB complex, which is involved in the assembly of the PIC (preinitiation complex) during RNA polymerase I-dependent transcription. The rate of PIC formation probably is primarily dependent on the rate of association of SL1/TIF-IB with the rDNA promoter. SL1/TIF-IB is involved in stabilization of nucleolar transcription factor 1/UBTF on rDNA. Formation of SL1/TIF-IB excludes the association of TBP with TFIID subunits. The protein is TATA box-binding protein-associated factor RNA polymerase I subunit D (Taf1d) of Rattus norvegicus (Rat).